Reading from the N-terminus, the 302-residue chain is Ornithine carbamoyltransferase (302 aa).

Carbamoyl phosphate-binding positions include 52-55 (STRT), Gln-79, Arg-103, and 130-133 (HPCQ). Residues Asn-161, Asp-221, and 225–226 (SM) contribute to the L-ornithine site. Carbamoyl phosphate contacts are provided by residues 261 to 262 (CL) and Arg-289.

This sequence belongs to the aspartate/ornithine carbamoyltransferase superfamily. OTCase family.

It localises to the cytoplasm. The catalysed reaction is carbamoyl phosphate + L-ornithine = L-citrulline + phosphate + H(+). It participates in amino-acid biosynthesis; L-arginine biosynthesis; L-arginine from L-ornithine and carbamoyl phosphate: step 1/3. In terms of biological role, reversibly catalyzes the transfer of the carbamoyl group from carbamoyl phosphate (CP) to the N(epsilon) atom of ornithine (ORN) to produce L-citrulline. This is Ornithine carbamoyltransferase from Methanosarcina acetivorans (strain ATCC 35395 / DSM 2834 / JCM 12185 / C2A).